The following is a 599-amino-acid chain: Elongation factor 4 (599 aa).

The 183-residue stretch at 5–187 (NHIRNFSIIA…QIVQLVPPPE (183 aa)) folds into the tr-type G domain. GTP contacts are provided by residues 17–22 (DHGKST) and 134–137 (NKMD).

It belongs to the TRAFAC class translation factor GTPase superfamily. Classic translation factor GTPase family. LepA subfamily.

It localises to the cell inner membrane. It carries out the reaction GTP + H2O = GDP + phosphate + H(+). Functionally, required for accurate and efficient protein synthesis under certain stress conditions. May act as a fidelity factor of the translation reaction, by catalyzing a one-codon backward translocation of tRNAs on improperly translocated ribosomes. Back-translocation proceeds from a post-translocation (POST) complex to a pre-translocation (PRE) complex, thus giving elongation factor G a second chance to translocate the tRNAs correctly. Binds to ribosomes in a GTP-dependent manner. In Hahella chejuensis (strain KCTC 2396), this protein is Elongation factor 4.